A 237-amino-acid chain; its full sequence is Arginine-binding periplasmic protein (237 aa).

Residues 1–18 form the signal peptide; it reads MKKTLLTLLFGCVVTAQA.

The protein belongs to the bacterial solute-binding protein 3 family.

The protein resides in the periplasm. Binds arginine; part of the arginine periplasmic transport system. The protein is Arginine-binding periplasmic protein (lapT) of Mannheimia haemolytica (Pasteurella haemolytica).